Reading from the N-terminus, the 557-residue chain is CTP synthase (557 aa).

The amidoligase domain stretch occupies residues 1-267 (MAKFVFVTGG…CREVLDVLDL (267 aa)). Serine 13 serves as a coordination point for CTP. Serine 13 is a UTP binding site. Residues 14–19 (SIGKGI) and aspartate 71 each bind ATP. Mg(2+)-binding residues include aspartate 71 and glutamate 141. CTP-binding positions include 148–150 (DIE), 188–193 (KTKPTQ), and lysine 224. UTP is bound by residues 188 to 193 (KTKPTQ) and lysine 224. One can recognise a Glutamine amidotransferase type-1 domain in the interval 292-534 (KVALVGKYVQ…IEAAQQRLPC (243 aa)). Glycine 354 provides a ligand contact to L-glutamine. The Nucleophile; for glutamine hydrolysis role is filled by cysteine 381. L-glutamine is bound by residues 382 to 385 (LGMQ), glutamate 405, and arginine 462. Residues histidine 507 and glutamate 509 contribute to the active site. The tract at residues 532 to 557 (LPCSPSEAMRQQNNSAAGSSHPSLQP) is disordered. A compositionally biased stretch (polar residues) spans 540–557 (MRQQNNSAAGSSHPSLQP).

The protein belongs to the CTP synthase family. As to quaternary structure, homotetramer.

It catalyses the reaction UTP + L-glutamine + ATP + H2O = CTP + L-glutamate + ADP + phosphate + 2 H(+). The catalysed reaction is L-glutamine + H2O = L-glutamate + NH4(+). It carries out the reaction UTP + NH4(+) + ATP = CTP + ADP + phosphate + 2 H(+). It participates in pyrimidine metabolism; CTP biosynthesis via de novo pathway; CTP from UDP: step 2/2. With respect to regulation, allosterically activated by GTP, when glutamine is the substrate; GTP has no effect on the reaction when ammonia is the substrate. The allosteric effector GTP functions by stabilizing the protein conformation that binds the tetrahedral intermediate(s) formed during glutamine hydrolysis. Inhibited by the product CTP, via allosteric rather than competitive inhibition. Catalyzes the ATP-dependent amination of UTP to CTP with either L-glutamine or ammonia as the source of nitrogen. Regulates intracellular CTP levels through interactions with the four ribonucleotide triphosphates. The chain is CTP synthase from Synechococcus sp. (strain CC9311).